We begin with the raw amino-acid sequence, 367 residues long: Protein pxr1 (367 aa).

Disordered regions lie at residues 1-28 (MGLS…TDSF) and 156-336 (KALK…PMGI). The span at 15–27 (DPNNTKWSGNTDS) shows a compositional bias: polar residues. The G-patch domain occupies 25–79 (TDSFGHRMMKSQGWTPGEYLGAKDAAHAEFHTAANASHIRVVIKDNNLGLGAKIG). Residues 167-182 (SSDDSDSSSDEEEEEK) show a composition bias toward acidic residues. Composition is skewed to basic residues over residues 209-221 (SKKS…SKKR), 236-248 (KSKK…KSKS), and 265-277 (KARK…KKRR). A compositionally biased stretch (low complexity) spans 282–296 (ATAGADTEETSSTSK). Basic residues predominate over residues 297–309 (SSKKNSKKDKHKS). Low complexity predominate over residues 310 to 328 (SSASESSTKESTPTVTESS).

The protein belongs to the PINX1 family.

Its subcellular location is the nucleus. The protein localises to the nucleolus. Functionally, involved in rRNA-processing at A0, A1 and A2 sites and negatively regulates telomerase. The sequence is that of Protein pxr1 (pxr1) from Sclerotinia sclerotiorum (strain ATCC 18683 / 1980 / Ss-1) (White mold).